A 518-amino-acid chain; its full sequence is MADNIIIFDTTLRDGEQALKASLTVKEKLQIAFALERLGVDVMEVGFPISSAGDFESVQTIARHIKHSRVCALSRAVDKDIDAAAEALKVAEAFRIHTFIATSALHVEAKLRRTFEDVVDMAINAVKRARNYTDDVEFSCEDAGRTGVDNICRIVEAAIKAGATTVNIPDTVGYCLPYQYGDIIANVMNRVPNIDKAIISVHCHNDLGMATANSLTAVQNGARQIECTINGIGERAGNTALEEVVMAIKTRQDMFNGLDTRINTQEIHRVSQMVSQLCNMPIQPNKAIVGSNAFAHSSGIHQDGMVKHKNTYEIMSPESIGLKKEKLNLTARSGRAAVKNHMSEMGYQESDYDLDKLYEAFLKLADKKGQVFDYDLEALAFIDMQQGDEDRLTLDVITSQCISHLPASAFVQVELDGKKMSQVSNGGNGPVDAVYNAILAITGLEMKMLNYNLTAKGEGAEALGQVDIVVEHEGRRFHGVGLATDIVESSARALIHAINAIYRSQKVADLKLHKIAGV.

Residues 5-268 form the Pyruvate carboxyltransferase domain; that stretch reads IIIFDTTLRD…DTRINTQEIH (264 aa). Residues D14, H202, H204, and N238 each contribute to the Mn(2+) site. A regulatory domain region spans residues 393–518; sequence TLDVITSQCI…DLKLHKIAGV (126 aa).

It belongs to the alpha-IPM synthase/homocitrate synthase family. LeuA type 1 subfamily. In terms of assembly, homodimer. The cofactor is Mn(2+).

Its subcellular location is the cytoplasm. The catalysed reaction is 3-methyl-2-oxobutanoate + acetyl-CoA + H2O = (2S)-2-isopropylmalate + CoA + H(+). Its pathway is amino-acid biosynthesis; L-leucine biosynthesis; L-leucine from 3-methyl-2-oxobutanoate: step 1/4. Catalyzes the condensation of the acetyl group of acetyl-CoA with 3-methyl-2-oxobutanoate (2-ketoisovalerate) to form 3-carboxy-3-hydroxy-4-methylpentanoate (2-isopropylmalate). The protein is 2-isopropylmalate synthase of Pasteurella multocida (strain Pm70).